The following is a 23-amino-acid chain: Pseudin-3 (23 aa).

As to expression, expressed by the skin glands.

The protein localises to the secreted. Functionally, possesses antifungal activity against C.albicans and is also active against E.coli and S.aureus. The sequence is that of Pseudin-3 from Pseudis paradoxa (Paradoxical frog).